The chain runs to 1024 residues: MKFFALFIQRPVATTLLTLAITLSGVIGFSLLPVSPLPQVDYPVIMVSASMPGADPETMASSIATPLERALGRIAGVNEMTSTSSLGSTRIILQFDLSRDINGAARDVQAALNAAQSLLPSGMPNRPTYRKMNPSDAPIMIMTLTSDTFSQGQLYDFASTQLAQKIAQTEGVSDVSVGGSSLPAVRVELNPSALFNQGVSLDAVRQAISAANVRRPQGSIDSSEQHWQVQANDEIKTAEGYRPLIIHYNNGSPVRLQDVANIVDSVQDVRNAGMSDGKPAVLLVISREPGANIIATVDRIRAELPALRASIPASIELNIAQDRSPTIRASLDEVERSLVIAVALVILVVFLFLRSGRATLIPAVAVPVSLIGTFTAMYLCGFSLNNLSLMALTIATGFVVDDAIVVLENISRHLEAGVKPMVAALRGVREVGFTVLSMSISLVAVFIPLLLMEGLPGRLFREFAVTLSVAIGISLVISLTLTPMMCAHLLRAQPTGKQQRIRGFGKVLLAIQQGYGRSLNWVLGHTRWVMVVLLSTIALNVWLYISIPKTFFPEQDTGRMMGFIQADQSISFQAMQQKLKDFMKIVSADPAVDNVTGFTGGSRTNSGSMFISLKPLSERSETAQQVITRLRGKLAKEPGASLFLSPVQDIRVGGRQSNASYQFTLLADDLAALREWEPKVRAALSKLPELADVNSDQQDKGSEMALTYDRETMARLGIDVSDANALLNNAFGQRQISTIYQPLNQYKVVMEVAPQYTQDVSSLDKMFVINSNGQSIPLSYFAKWQPANAPLSVNHQGLSAASTISFNLPDGGSLSEATAAVERAMTELGVPSTVRGMFAGTAQVFQDTLKSQLWLIMAAIATVYIVLGILYESYVHPLTILSTLPSAGVGALLALELFDAPFSLIALIGIMLLIGIVKKNAIMMVDFALDAQRNGNLNARDAIFQASLLRFRPILMTTLAALFGALPLVISSGDGAELRQPLGITIVGGLVMSQLLTLYTTPVVYLYFDRLRSRFSKKPLMRLE.

The next 12 helical transmembrane spans lie at 12–32 (VATT…FSLL), 333–353 (EVER…FLFL), 360–380 (LIPA…MYLC), 387–407 (LSLM…IVVL), 431–451 (VGFT…PLLL), 463–483 (FAVT…TLTP), 528–548 (WVMV…ISIP), 853–873 (LWLI…LYES), 875–895 (VHPL…LLAL), 897–917 (LFDA…IGIV), 953–973 (PILM…ISSG), and 984–1004 (ITIV…TPVV).

The protein belongs to the resistance-nodulation-cell division (RND) (TC 2.A.6) family. MdtC subfamily. Part of a tripartite efflux system composed of MdtA, MdtB and MdtC. MdtC forms a heteromultimer with MdtB.

It is found in the cell inner membrane. The sequence is that of Multidrug resistance protein MdtC from Yersinia enterocolitica serotype O:8 / biotype 1B (strain NCTC 13174 / 8081).